We begin with the raw amino-acid sequence, 308 residues long: Ornithine carbamoyltransferase (308 aa).

Carbamoyl phosphate is bound by residues 56–59, glutamine 83, arginine 107, and 134–137; these read STRT and HPCQ. L-ornithine contacts are provided by residues asparagine 165, aspartate 225, and 229-230; that span reads SM. Carbamoyl phosphate contacts are provided by residues 266–267 and arginine 294; that span reads CL.

This sequence belongs to the aspartate/ornithine carbamoyltransferase superfamily. OTCase family.

The protein resides in the cytoplasm. The enzyme catalyses carbamoyl phosphate + L-ornithine = L-citrulline + phosphate + H(+). The protein operates within amino-acid degradation; L-arginine degradation via ADI pathway; carbamoyl phosphate from L-arginine: step 2/2. In terms of biological role, reversibly catalyzes the transfer of the carbamoyl group from carbamoyl phosphate (CP) to the N(epsilon) atom of ornithine (ORN) to produce L-citrulline. This Cereibacter sphaeroides (strain KD131 / KCTC 12085) (Rhodobacter sphaeroides) protein is Ornithine carbamoyltransferase.